The primary structure comprises 203 residues: Putative 3-methyladenine DNA glycosylase (203 aa).

Belongs to the DNA glycosylase MPG family.

This chain is Putative 3-methyladenine DNA glycosylase, found in Clostridium beijerinckii (strain ATCC 51743 / NCIMB 8052) (Clostridium acetobutylicum).